The primary structure comprises 461 residues: tRNA modification GTPase MnmE (461 aa).

The (6S)-5-formyl-5,6,7,8-tetrahydrofolate site is built by R27, E89, and R128. Residues 224–382 form the TrmE-type G domain; sequence GLATAIVGRP…LEELINKLFF (159 aa). N234 contributes to the K(+) binding site. GTP is bound by residues 234 to 239, 253 to 259, and 278 to 281; these read NVGKSS, TDVAGTT, and DTAG. S238 is a binding site for Mg(2+). K(+) contacts are provided by T253, V255, and T258. Position 259 (T259) interacts with Mg(2+). A (6S)-5-formyl-5,6,7,8-tetrahydrofolate-binding site is contributed by K461.

The protein belongs to the TRAFAC class TrmE-Era-EngA-EngB-Septin-like GTPase superfamily. TrmE GTPase family. In terms of assembly, homodimer. Heterotetramer of two MnmE and two MnmG subunits. K(+) serves as cofactor.

The protein resides in the cytoplasm. Exhibits a very high intrinsic GTPase hydrolysis rate. Involved in the addition of a carboxymethylaminomethyl (cmnm) group at the wobble position (U34) of certain tRNAs, forming tRNA-cmnm(5)s(2)U34. The chain is tRNA modification GTPase MnmE from Lactobacillus helveticus (strain DPC 4571).